The primary structure comprises 156 residues: 6,7-dimethyl-8-ribityllumazine synthase (156 aa).

Residues Phe24, 58–60, and 82–84 each bind 5-amino-6-(D-ribitylamino)uracil; these read AFE and VII. 87–88 is a (2S)-2-hydroxy-3-oxobutyl phosphate binding site; sequence ST. The active-site Proton donor is the His90. Phe115 contributes to the 5-amino-6-(D-ribitylamino)uracil binding site. A (2S)-2-hydroxy-3-oxobutyl phosphate-binding site is contributed by Arg129.

The protein belongs to the DMRL synthase family.

It catalyses the reaction (2S)-2-hydroxy-3-oxobutyl phosphate + 5-amino-6-(D-ribitylamino)uracil = 6,7-dimethyl-8-(1-D-ribityl)lumazine + phosphate + 2 H2O + H(+). It functions in the pathway cofactor biosynthesis; riboflavin biosynthesis; riboflavin from 2-hydroxy-3-oxobutyl phosphate and 5-amino-6-(D-ribitylamino)uracil: step 1/2. Functionally, catalyzes the formation of 6,7-dimethyl-8-ribityllumazine by condensation of 5-amino-6-(D-ribitylamino)uracil with 3,4-dihydroxy-2-butanone 4-phosphate. This is the penultimate step in the biosynthesis of riboflavin. The protein is 6,7-dimethyl-8-ribityllumazine synthase of Chlorobaculum parvum (strain DSM 263 / NCIMB 8327) (Chlorobium vibrioforme subsp. thiosulfatophilum).